The sequence spans 454 residues: Carbon catabolite repressor protein 4 homolog 5 (454 aa).

The tract at residues 1–76 (MSGYERKNTT…SLRRRRRTKE (76 aa)) is disordered. The segment covering 31 to 41 (VYEKSNRKESI) has biased composition (basic and acidic residues). A compositionally biased stretch (basic residues) spans 61 to 75 (VRHSKSSLRRRRRTK). Glu-153 provides a ligand contact to Mg(2+).

This sequence belongs to the CCR4/nocturin family. Component of the CCR4-NOT complex, at least composed of CRR4 and CAF1 proteins. Requires Mg(2+) as cofactor.

It localises to the nucleus. It is found in the cytoplasm. It catalyses the reaction Exonucleolytic cleavage of poly(A) to 5'-AMP.. Its function is as follows. Acts as a catalytic component of the CCR4-NOT core complex, which in the nucleus seems to be a general transcription factor, and in the cytoplasm the major mRNA deadenylase involved in mRNA turnover. The protein is Carbon catabolite repressor protein 4 homolog 5 (CCR4-5) of Arabidopsis thaliana (Mouse-ear cress).